Here is a 578-residue protein sequence, read N- to C-terminus: Vacuolar protein 8 (578 aa).

ARM repeat units follow at residues 58–95 (NRAE…FAEI), 96–135 (TERD…NLAV), 137–176 (ADNK…NLAT), 178–217 (EDNK…NMTH), 219–258 (DDNR…NIAV), 262–301 (NRKR…NLAS), 303–342 (EKYQ…NISI), 344–384 (PLNE…NLAA), and 428–467 (DELK…NLSS).

It belongs to the beta-catenin family.

It localises to the vacuole membrane. Functions in both vacuole inheritance and protein targeting from the cytoplasm to vacuole. This Aspergillus oryzae (strain ATCC 42149 / RIB 40) (Yellow koji mold) protein is Vacuolar protein 8 (vac8).